The primary structure comprises 128 residues: 3-aminoacrylate deaminase RutC (128 aa).

This sequence belongs to the RutC family. As to quaternary structure, homotrimer.

The enzyme catalyses (Z)-3-aminoacrylate + H2O + H(+) = 3-oxopropanoate + NH4(+). In terms of biological role, involved in pyrimidine catabolism. Catalyzes the deamination of 3-aminoacrylate to malonic semialdehyde, a reaction that can also occur spontaneously. RutC may facilitate the reaction and modulate the metabolic fitness, rather than catalyzing essential functions. The chain is 3-aminoacrylate deaminase RutC from Escherichia coli (strain SE11).